Consider the following 748-residue polypeptide: Cysteine--tRNA ligase, cytoplasmic (748 aa).

The tract at residues 1 to 25 (MADSSGQQGKGRRVQPQWSPPAGTQ) is disordered. At alanine 2 the chain carries N-acetylalanine. At serine 19 the chain carries Phosphoserine. Residue cysteine 55 participates in Zn(2+) binding. Residue glycine 56 participates in L-cysteine binding. The short motif at 57–67 (PTVYDASHMGH) is the 'HIGH' region element. Phosphoserine is present on arginine 79. Residue threonine 96 coordinates L-cysteine. A 'KIIK' region motif is present at residues 101-104 (KIIK). Serine 305 and serine 307 each carry phosphoserine. Cysteine 348, histidine 373, and glutamate 377 together coordinate Zn(2+). Residue histidine 373 participates in L-cysteine binding. Positions 406–410 (KMSKS) match the 'KMSKS' region motif. Position 409 (lysine 409) interacts with ATP. Lysine 503 is modified (N6-acetyllysine). Over residues 653–679 (EKRRVEEEKRKKKEEAARRKQEQEAAK) the composition is skewed to basic and acidic residues. The tract at residues 653 to 686 (EKRRVEEEKRKKKEEAARRKQEQEAAKLAKMKIP) is disordered. Position 746 is a phosphoserine (serine 746).

This sequence belongs to the class-I aminoacyl-tRNA synthetase family. Homodimer. The cofactor is Zn(2+).

The protein resides in the cytoplasm. It carries out the reaction tRNA(Cys) + L-cysteine + ATP = L-cysteinyl-tRNA(Cys) + AMP + diphosphate. Catalyzes the ATP-dependent ligation of cysteine to tRNA(Cys). The chain is Cysteine--tRNA ligase, cytoplasmic from Homo sapiens (Human).